We begin with the raw amino-acid sequence, 178 residues long: Cell division protein SepF (178 aa).

The segment covering 21–46 (YESEQSVATHHDEERPQAQEREERRA) has biased composition (basic and acidic residues). Residues 21 to 65 (YESEQSVATHHDEERPQAQEREERRAPAPVREVVREMPTVDAEEE) form a disordered region.

It belongs to the SepF family. As to quaternary structure, homodimer. Interacts with FtsZ.

The protein resides in the cytoplasm. Cell division protein that is part of the divisome complex and is recruited early to the Z-ring. Probably stimulates Z-ring formation, perhaps through the cross-linking of FtsZ protofilaments. Its function overlaps with FtsA. The sequence is that of Cell division protein SepF from Paenarthrobacter aurescens (strain TC1).